The following is a 138-amino-acid chain: Cysteine desulfuration protein SufE (138 aa).

The Cysteine persulfide intermediate role is filled by Cys-51.

This sequence belongs to the SufE family. Homodimer. Interacts with SufS.

Its subcellular location is the cytoplasm. It participates in cofactor biosynthesis; iron-sulfur cluster biosynthesis. Functionally, participates in cysteine desulfuration mediated by SufS. Cysteine desulfuration mobilizes sulfur from L-cysteine to yield L-alanine and constitutes an essential step in sulfur metabolism for biosynthesis of a variety of sulfur-containing biomolecules. Functions as a sulfur acceptor for SufS, by mediating the direct transfer of the sulfur atom from the S-sulfanylcysteine of SufS, an intermediate product of cysteine desulfuration process. This Salmonella dublin (strain CT_02021853) protein is Cysteine desulfuration protein SufE.